Reading from the N-terminus, the 1361-residue chain is Cell migration-inducing and hyaluronan-binding protein (1361 aa).

Positions 1 to 30 are cleaved as a signal peptide; that stretch reads MGAAGRQDFLFKAMLTISWLTLTCFPGATS. Positions 44–166 constitute a G8 domain; the sequence is QPWNPGHDQD…KKLSWTFLNK (123 aa). N-linked (GlcNAc...) asparagine glycans are attached at residues Asn119, Asn165, Asn312, Asn370, and Asn420. Residues 176–317 form the GG-type lectin 1 domain; the sequence is GGYFFERSWG…GEYFNVSLSS (142 aa). The segment at 295-591 is necessary for its endoplasmic reticulum (ER) retention and interaction with HSPA5; the sequence is AAARVFKLFQ…IHHTFSRCVT (297 aa). PbH1 repeat units lie at residues 572–594, 595–617, 719–741, and 798–819; these read DPPT…TVHG, SNGL…FTED, IPLG…IIDN, and GGDV…TLAS. 2 N-linked (GlcNAc...) asparagine glycosylation sites follow: Asn889 and Asn921. One can recognise a GG-type lectin 2 domain in the interval 1227 to 1361; the sequence is NDFAYIEVDG…PIPVVKKKKL (135 aa).

Belongs to the CEMIP family. In terms of assembly, interacts with EPHA2 and ITPR3. Interacts with HSPA5/BIP; the interaction induces calcium leakage from the endoplasmic reticulum and cell migration. Interacts with clathrin heavy chain/CLTC. N-glycosylated; glycosylation is not necessary for HA-binding. Expressed in dermal and in synovial fibroblasts. Strongly expressed in gastric cancers compared with the paired normal tissues. Strongly expressed in both ductal carcinoma and invasive breast cancer cells compared with benign epithelial cells (at protein level). Strongly expressed in brain, placenta, prostate, breast, lung and testis. Expressed in fibroblasts, epithelial cells and cancer cells. In ear, it is specifically expressed in inner ear. Expressed in cochlea and vestibule tissues. Strongly expressed in gastric cancers compared with the paired normal tissues. Strongly expressed in colon adenocarcinomas compared with normal colonic mucosas. Strongly expressed in breast cancer as compared to normal breast tissue.

The protein resides in the nucleus. It localises to the cytoplasm. It is found in the endoplasmic reticulum. Its subcellular location is the cell membrane. The protein localises to the membrane. The protein resides in the clathrin-coated pit. It localises to the secreted. It carries out the reaction Random hydrolysis of (1-&gt;4)-linkages between N-acetyl-beta-D-glucosamine and D-glucuronate residues in hyaluronate.. With respect to regulation, activity is up-regulated by histamine. Its function is as follows. Mediates depolymerization of hyaluronic acid (HA) via the cell membrane-associated clathrin-coated pit endocytic pathway. Binds to hyaluronic acid. Hydrolyzes high molecular weight hyaluronic acid to produce an intermediate-sized product, a process that may occur through rapid vesicle endocytosis and recycling without intracytoplasmic accumulation or digestion in lysosomes. Involved in hyaluronan catabolism in the dermis of the skin and arthritic synovium. Positively regulates epithelial-mesenchymal transition (EMT), and hence tumor cell growth, invasion and cancer dissemination. In collaboration with HSPA5/BIP, promotes cancer cell migration in a calcium and PKC-dependent manner. May be involved in hearing. The sequence is that of Cell migration-inducing and hyaluronan-binding protein from Homo sapiens (Human).